The following is a 627-amino-acid chain: Nuclear receptor subfamily 4 group A member 3 (627 aa).

The segment at 1–112 (MPCVQAQYSP…HHHHHHHHHQ (112 aa)) is activation function (AF)-1 domain. The tract at residues 1–139 (MPCVQAQYSP…PSTSMYFKQS (139 aa)) is required for DNA-PK heterotrimer. Positions 1–292 (MPCVQAQYSP…NRSSSSGEGT (292 aa)) are interaction with NCOA1, NCOA2, NCOA3 and KAT2B. Disordered regions lie at residues 96 to 162 (HGYH…DELP) and 268 to 289 (ASSL…SSSG). Over residues 97-112 (GYHHHHHHHHHHHHHQ) the composition is skewed to basic residues. Pro residues predominate over residues 141–150 (PSTPTTPGFP). The segment covering 269-288 (SSLLGESPSLPSPPNRSSSS) has biased composition (low complexity). A DNA-binding region (nuclear receptor) is located at residues 290–365 (EGTCAVCGDN…VGMVKEVVRT (76 aa)). 2 NR C4-type zinc fingers span residues 293 to 313 (CAVC…CEGC) and 329 to 353 (CLAN…FQKC). The disordered stretch occupies residues 365–395 (TDSLKGRRGRLPSKPKSPLQQEPSQPSPPSP). A compositionally biased stretch (low complexity) spans 378 to 388 (KPKSPLQQEPS). Residues 380–627 (KSPLQQEPSQ…DKLFLDTLPF (248 aa)) form an interaction with KAT2B region. Residues 395–624 (PPICMMNALV…SVIDKLFLDT (230 aa)) form the NR LBD domain.

The protein belongs to the nuclear hormone receptor family. NR4 subfamily. As to quaternary structure, interacts with SIX3 (via homeobox); differentially regulates the transcriptional activities of NR4A3. Interacts with NCOA2; potentiates the activity of the NR4A3. Interacts with NCOA1, NCOA3, MED1 and KAT2B. Interacts with EP300 and NCOA2; mediates the recruitment of MED1 in the coactivator complex. Interacts with the constituents of DNA-PK heterotrimer PRKDC, XRCC6 and XRCC5; phosphorylates and prevents NR4A3 ubiquitinylation and degradation. Interacts with NR3C1 (via nuclear receptor DNA-binding domain); the interactions represses transcription activity of NR4A3 on the POMC promoter Nur response element (NurRE). Interacts with TRIM28; the interactions potentiates NR4A3 activity on NurRE promoter. Binds DNA as a monomer and homodimer. Interacts with PARP1; activates PARP1 by improving acetylation of PARP1 and suppressing the interaction between PARP1 and SIRT1. Phosphorylated by PRKDC. Ubiquitous. Highest levels of expression in brain. Widely expressed throughout the arcuate nucleus region of the hypothalamus, namely in AgRP neurons.

Its subcellular location is the nucleus. In terms of biological role, transcriptional activator that binds to regulatory elements in promoter regions in a cell- and response element (target)-specific manner. Induces gene expression by binding as monomers to the NR4A1 response element (NBRE) 5'-AAAAGGTCA-3' site and as homodimers to the Nur response element (NurRE) site in the promoter of their regulated target genes. Plays a role in the regulation of proliferation, survival and differentiation of many different cell types and also in metabolism and inflammation. Mediates proliferation of vascular smooth muscle, myeloid progenitor cell and type B pancreatic cells; promotes mitogen-induced vascular smooth muscle cell proliferation through transactivation of SKP2 promoter by binding a NBRE site. Upon PDGF stimulation, stimulates vascular smooth muscle cell proliferation by regulating CCND1 and CCND2 expression. In islets, induces type B pancreatic cell proliferation through up-regulation of genes that activate cell cycle, as well as genes that cause degradation of the CDKN1A. Negatively regulates myeloid progenitor cell proliferation by repressing RUNX1 in a NBRE site-independent manner. During inner ear, plays a role as a key mediator of the proliferative growth phase of semicircular canal development. Also mediates survival of neuron and smooth muscle cells; mediates CREB-induced neuronal survival, and during hippocampus development, plays a critical role in pyramidal cell survival and axonal guidance. Is required for S phase entry of the cell cycle and survival of smooth muscle cells by inducing CCND1, resulting in RB1 phosphorylation. Binds to NBRE motif in CCND1 promoter, resulting in the activation of the promoter and CCND1 transcription. Also plays a role in inflammation; upon TNF stimulation, mediates monocyte adhesion by inducing the expression of VCAM1 and ICAM1 by binding to the NBRE consensus site. In mast cells activated by Fc-epsilon receptor cross-linking, promotes the synthesis and release of cytokines but impairs events leading to degranulation. Also plays a role in metabolism; by modulating feeding behavior; and by playing a role in energy balance by inhibiting the glucocorticoid-induced orexigenic neuropeptides AGRP expression, at least in part by forming a complex with activated NR3C1 on the AGRP- glucocorticoid response element (GRE), and thus weakening the DNA binding activity of NR3C1. Upon catecholamines stimulation, regulates gene expression that controls oxidative metabolism in skeletal muscle. Plays a role in glucose transport by regulating translocation of the SLC2A4 glucose transporter to the cell surface. Finally, during gastrulation plays a crucial role in the formation of anterior mesoderm by controlling cell migration. Inhibits adipogenesis. Also participates in cardiac hypertrophy by activating PARP1. This Mus musculus (Mouse) protein is Nuclear receptor subfamily 4 group A member 3 (Nr4a3).